A 427-amino-acid chain; its full sequence is Glutamate-1-semialdehyde 2,1-aminomutase (427 aa).

Lys267 is modified (N6-(pyridoxal phosphate)lysine).

It belongs to the class-III pyridoxal-phosphate-dependent aminotransferase family. HemL subfamily. In terms of assembly, homodimer. Pyridoxal 5'-phosphate is required as a cofactor.

It is found in the cytoplasm. It carries out the reaction (S)-4-amino-5-oxopentanoate = 5-aminolevulinate. Its pathway is porphyrin-containing compound metabolism; protoporphyrin-IX biosynthesis; 5-aminolevulinate from L-glutamyl-tRNA(Glu): step 2/2. The polypeptide is Glutamate-1-semialdehyde 2,1-aminomutase (Syntrophotalea carbinolica (strain DSM 2380 / NBRC 103641 / GraBd1) (Pelobacter carbinolicus)).